The chain runs to 72 residues: Threonine dehydratase operon activator protein (72 aa).

Functionally, probable trans-acting positive activator for the tdc operon. This chain is Threonine dehydratase operon activator protein (tdcR), found in Escherichia coli (strain K12).